The chain runs to 550 residues: MESSRILITSALPYANGPLHFGHITGAYLPADVYARFQRLQGKEVLYICGSDEYGIAITLNAELAGMGYQEYVDMYHKLHKDTFKKLGISVDFFSRTTNTYHPAIVQDFYRNLQERGLVENQVTEQLYSEEEGKFLADRYVVGTCPKCGFDRARGDECQQCGADYEARDLKEPRSKLTGAALSLRDTEHAYLHLERMKEDLLAFVQGIYLRPHIRNFVTDYIEHLRPRAVTRDLSWGIPVPDLENKVFYVWFDAPIGYISGTMDWAASIGDPEAWKKFWLDDTVTYAQFIGKDNTSFHAVIFPAMEIGQSLPYKKVDALVTSEFLLLEGFQFSKSDGNFIDMDAFLETYSLDKLRYVLAAIAPETSDSEFSFQEFKTRCNSELVGKYGNFVNRVLAFAVKNGCTELSSPQLEQKDLDFISKSQKLAKDAAEHYAQYSLRKACSTIMELAALGNGYFNDEAPWKLAKEGNWNRVRAILFCACYCQKLLALISYPIMPETALKILEMIAPHSLDLGSQDPDRLQSLWTDSFFDYSEEKFSLKEPELLFTMVE.

Residues 13–23 (PYANGPLHFGH) carry the 'HIGH' region motif. 4 residues coordinate Zn(2+): C145, C148, C158, and C161. The 'KMSKS' region motif lies at 331–335 (QFSKS). K334 contributes to the ATP binding site.

It belongs to the class-I aminoacyl-tRNA synthetase family. MetG type 1 subfamily. In terms of assembly, monomer. The cofactor is Zn(2+).

The protein resides in the cytoplasm. It catalyses the reaction tRNA(Met) + L-methionine + ATP = L-methionyl-tRNA(Met) + AMP + diphosphate. Functionally, is required not only for elongation of protein synthesis but also for the initiation of all mRNA translation through initiator tRNA(fMet) aminoacylation. In Chlamydia trachomatis serovar A (strain ATCC VR-571B / DSM 19440 / HAR-13), this protein is Methionine--tRNA ligase.